A 1905-amino-acid chain; its full sequence is Low-density lipoprotein receptor-related protein 4 (1905 aa).

Positions 1–20 (MRRWWGALLLGALLCAHGIA) are cleaved as a signal peptide. Over 21–1725 (SSLECACGRS…AAPGEGLHVS (1705 aa)) the chain is Extracellular. LDL-receptor class A domains lie at 26–67 (ACGR…DGCT), 70–106 (TCSP…QDCP), 109–144 (ECEE…EQCD), 147–183 (KCSD…ESCP), 190–226 (PCNL…SDCS), 230–266 (PCRS…RNCT), 269–305 (MCTA…ENCE), and 311–350 (QCAS…QNCR). 30 disulfide bridges follow: Cys27/Cys44, Cys34/Cys57, Cys51/Cys66, Cys71/Cys83, Cys78/Cys96, Cys90/Cys105, Cys110/Cys122, Cys117/Cys135, Cys129/Cys143, Cys148/Cys160, Cys155/Cys173, Cys167/Cys182, Cys191/Cys203, Cys198/Cys216, Cys210/Cys225, Cys231/Cys243, Cys238/Cys256, Cys250/Cys265, Cys270/Cys282, Cys277/Cys295, Cys289/Cys304, Cys312/Cys324, Cys319/Cys337, Cys331/Cys349, Cys358/Cys369, Cys365/Cys378, Cys380/Cys393, Cys399/Cys409, Cys405/Cys418, and Cys420/Cys433. A glycan (N-linked (GlcNAc...) asparagine) is linked at Asn264. Residues 354 to 394 (GEENCNVNNGGCAQKCQMVRGAVQCTCHTGYRLTEDGRTCQ) enclose the EGF-like 1; atypical domain. The EGF-like 2; calcium-binding domain maps to 395–434 (DVNECAEEGYCSQGCTNTEGAFQCWCEAGYELRPDRRSCK). 5 LDL-receptor class B repeats span residues 480 to 522 (ELVF…DWVH), 523 to 565 (DKLY…HPME), 566 to 609 (GTIY…DYAG), 610 to 652 (RRMY…FEDS), and 653 to 693 (LYWT…LHPQ). The N-linked (GlcNAc...) asparagine glycan is linked to Asn498. Residues 698-737 (GKNRCGDNNGGCTHLCLPSGQNYTCACPTGFRKINSHACA) form the EGF-like 3 domain. 3 cysteine pairs are disulfide-bonded: Cys702-Cys713, Cys709-Cys722, and Cys724-Cys736. Residue Asn719 is glycosylated (N-linked (GlcNAc...) asparagine). LDL-receptor class B repeat units lie at residues 785-827 (DHVY…DWVT), 828-870 (NKLY…EPMG), 871-914 (GYMY…DYGS), 915-956 (QRLY…LYGQ), and 957-998 (RIYW…FHRQ). An N-linked (GlcNAc...) asparagine glycan is attached at Asn901. Asn1077 carries N-linked (GlcNAc...) asparagine glycosylation. LDL-receptor class B repeat units follow at residues 1093 to 1135 (GKVY…DAIG), 1136 to 1178 (RKVY…YHEM), 1179 to 1222 (GFMY…DKTS), 1223 to 1263 (SQLL…LLDS), 1264 to 1306 (YIYW…DRAQ), 1397 to 1439 (GKVY…DWVA), 1440 to 1482 (RNLY…FPRK), 1483 to 1526 (GYLF…DYDT), 1527 to 1568 (RRIY…QDRW), and 1569 to 1610 (IYWT…SPQR). N-linked (GlcNAc...) asparagine glycosylation is found at Asn1415 and Asn1467. The tract at residues 1661–1696 (ATSMNEKSPVLPNTLPTTLHSSTTKTRTSLEGAGGR) is disordered. Over residues 1674 to 1690 (TLPTTLHSSTTKTRTSL) the composition is skewed to low complexity. The chain crosses the membrane as a helical span at residues 1726–1746 (YAIGGLLSILLILLVIAALML). Topologically, residues 1747-1905 (YRHRKSKFTD…ERKLSSESQV (159 aa)) are cytoplasmic. Positions 1852–1905 (ASSGSLDDTETEQLLQEEQSECSSVHTAATPERRGSLPDTGWKHERKLSSESQV) are disordered. Positions 1882–1905 (PERRGSLPDTGWKHERKLSSESQV) are enriched in basic and acidic residues.

This sequence belongs to the LDLR family. Homooligomer. Interacts with MUSK; the heterodimer forms an AGRIN receptor complex that binds AGRIN resulting in activation of MUSK. Interacts (via the extracellular domain) with SOST; the interaction facilitates the inhibition of Wnt signaling. Interacts with MESD; the interaction promotes glycosylation of LRP4 and its cell-surface expression. In terms of processing, N-glycosylation is required for cell surface location.

It localises to the cell membrane. Functionally, mediates SOST-dependent inhibition of bone formation. Functions as a specific facilitator of SOST-mediated inhibition of Wnt signaling. Plays a key role in the formation and the maintenance of the neuromuscular junction (NMJ), the synapse between motor neuron and skeletal muscle. Directly binds AGRIN and recruits it to the MUSK signaling complex. Mediates the AGRIN-induced phosphorylation of MUSK, the kinase of the complex. The activation of MUSK in myotubes induces the formation of NMJ by regulating different processes including the transcription of specific genes and the clustering of AChR in the postsynaptic membrane. Alternatively, may be involved in the negative regulation of the canonical Wnt signaling pathway, being able to antagonize the LRP6-mediated activation of this pathway. More generally, has been proposed to function as a cell surface endocytic receptor binding and internalizing extracellular ligands for degradation by lysosomes. Plays an essential role in the process of digit differentiation. This is Low-density lipoprotein receptor-related protein 4 (Lrp4) from Mus musculus (Mouse).